We begin with the raw amino-acid sequence, 1399 residues long: DNA-directed RNA polymerase subunit beta' (1399 aa).

Positions 70, 72, 85, and 88 each coordinate Zn(2+). Asp460, Asp462, and Asp464 together coordinate Mg(2+). The Zn(2+) site is built by Cys814, Cys888, Cys895, and Cys898.

Belongs to the RNA polymerase beta' chain family. In terms of assembly, the RNAP catalytic core consists of 2 alpha, 1 beta, 1 beta' and 1 omega subunit. When a sigma factor is associated with the core the holoenzyme is formed, which can initiate transcription. Mg(2+) is required as a cofactor. Zn(2+) serves as cofactor.

The enzyme catalyses RNA(n) + a ribonucleoside 5'-triphosphate = RNA(n+1) + diphosphate. In terms of biological role, DNA-dependent RNA polymerase catalyzes the transcription of DNA into RNA using the four ribonucleoside triphosphates as substrates. The protein is DNA-directed RNA polymerase subunit beta' of Pseudomonas putida (strain GB-1).